The following is a 320-amino-acid chain: AA9 family lytic polysaccharide monooxygenase-like protein CEL1 (320 aa).

The N-terminal stretch at 1 to 29 (MRLPSRQQVLKMLATFSLALGLFAAKVQA) is a signal peptide. 2 disulfide bridges follow: cysteine 78–cysteine 199 and cysteine 121–cysteine 126. Histidine 109 contacts Cu(2+). N-linked (GlcNAc...) asparagine glycosylation occurs at asparagine 163. Residues histidine 189 and glutamine 194 each coordinate O2. Position 196 (tyrosine 196) interacts with Cu(2+). The disordered stretch occupies residues 255–284 (GSGGNGGSPTTTPHTTTPITTSPPPTSTPG). The segment covering 262 to 274 (SPTTTPHTTTPIT) has biased composition (low complexity). Positions 284 to 320 (GTIPQYGQCGGIGWTGGTGCVAPYQCKVINDYYSQCL) constitute a CBM1 domain.

The protein belongs to the polysaccharide monooxygenase AA9 family. Cu(2+) serves as cofactor.

The protein resides in the secreted. It carries out the reaction [(1-&gt;4)-beta-D-glucosyl]n+m + reduced acceptor + O2 = 4-dehydro-beta-D-glucosyl-[(1-&gt;4)-beta-D-glucosyl]n-1 + [(1-&gt;4)-beta-D-glucosyl]m + acceptor + H2O.. Lytic polysaccharide monooxygenase (LPMO)-like protein that binds strongly to cellulose. Seems not to acts as an endoglucanase, a ceUobiohydrolase able to hydrolyze fluorogenic cellobiosides, a /3-glucosidase, a xylanase, nor a cellobiose:quinone oxidoreductase. The sequence is that of AA9 family lytic polysaccharide monooxygenase-like protein CEL1 from Agaricus bisporus (White button mushroom).